Reading from the N-terminus, the 134-residue chain is Holo-[acyl-carrier-protein] synthase (134 aa).

Positions 8 and 57 each coordinate Mg(2+).

The protein belongs to the P-Pant transferase superfamily. AcpS family. Requires Mg(2+) as cofactor.

It is found in the cytoplasm. It catalyses the reaction apo-[ACP] + CoA = holo-[ACP] + adenosine 3',5'-bisphosphate + H(+). Functionally, transfers the 4'-phosphopantetheine moiety from coenzyme A to a Ser of acyl-carrier-protein. In Rhizobium leguminosarum bv. trifolii (strain WSM2304), this protein is Holo-[acyl-carrier-protein] synthase.